The sequence spans 114 residues: N(4)-acetylcytidine amidohydrolase (114 aa).

Residues 8–93 (TFFEFLTPLV…ALIQEIYPNI (86 aa)) form the ASCH domain. Lys22 functions as the Proton acceptor in the catalytic mechanism. Thr25 serves as the catalytic Nucleophile. The Proton donor role is filled by Glu75.

It belongs to the N(4)-acetylcytidine amidohydrolase family.

The catalysed reaction is N(4)-acetylcytidine + H2O = cytidine + acetate + H(+). It carries out the reaction N(4)-acetyl-2'-deoxycytidine + H2O = 2'-deoxycytidine + acetate + H(+). It catalyses the reaction N(4)-acetylcytosine + H2O = cytosine + acetate + H(+). In terms of biological role, catalyzes the hydrolysis of N(4)-acetylcytidine (ac4C). The polypeptide is N(4)-acetylcytidine amidohydrolase (Vibrio cholerae serotype O1 (strain ATCC 39541 / Classical Ogawa 395 / O395)).